Consider the following 205-residue polypeptide: dTTP/UTP pyrophosphatase (205 aa).

Aspartate 71 serves as the catalytic Proton acceptor.

It belongs to the Maf family. YhdE subfamily. A divalent metal cation is required as a cofactor.

The protein resides in the cytoplasm. The enzyme catalyses dTTP + H2O = dTMP + diphosphate + H(+). It carries out the reaction UTP + H2O = UMP + diphosphate + H(+). Functionally, nucleoside triphosphate pyrophosphatase that hydrolyzes dTTP and UTP. May have a dual role in cell division arrest and in preventing the incorporation of modified nucleotides into cellular nucleic acids. This is dTTP/UTP pyrophosphatase from Syntrophus aciditrophicus (strain SB).